The primary structure comprises 766 residues: FYVE, RhoGEF and PH domain-containing protein 4 (766 aa).

Disordered regions lie at residues 1–20, 46–83, and 134–188; these read MEEI…PSKV, NLNA…DKTQ, and ETAT…ESPL. Residues 1–150 are actin filament-binding; sequence MEEIKPASAS…SPTTDSCDGN (150 aa). 2 stretches are compositionally biased toward polar residues: residues 58-83 and 145-157; these read LTTT…DKTQ and DSCD…SSYR. A compositionally biased stretch (basic and acidic residues) spans 167–184; it reads LEERGAETETKVQERENG. In terms of domain architecture, DH spans 206 to 393; that stretch reads KLHKIANELL…STAASHSNSA (188 aa). The PH 1 domain maps to 422–521; it reads ELIKEGQILK…WIKALQETID (100 aa). The FYVE-type zinc-finger motif lies at 559–619; the sequence is DNEVTMCMKC…VCKDCYQIIS (61 aa). The Zn(2+) site is built by Cys-565, Cys-568, Cys-582, Cys-585, Cys-590, Cys-593, Cys-611, and Cys-614. Residues 643–740 form the PH 2 domain; that stretch reads NSVVCSFLQY…WLKVILLAVT (98 aa). Ser-702 and Ser-716 each carry phosphoserine. Positions 742-766 are disordered; the sequence is ETPGGPNEHPATLDDHPEPKKKSEC. Basic and acidic residues predominate over residues 752-766; that stretch reads ATLDDHPEPKKKSEC.

Homooligomer. In terms of tissue distribution, expressed in different tissues, including brain, cerebellum, peripheral nerve, skeletal muscle, heart, uterus, placenta and testis.

It localises to the cytoplasm. The protein localises to the cytoskeleton. The protein resides in the cell projection. It is found in the filopodium. Its function is as follows. Activates CDC42, a member of the Ras-like family of Rho- and Rac proteins, by exchanging bound GDP for free GTP. Plays a role in regulating the actin cytoskeleton and cell shape. Activates MAPK8. This is FYVE, RhoGEF and PH domain-containing protein 4 (FGD4) from Homo sapiens (Human).